Here is a 490-residue protein sequence, read N- to C-terminus: GTPase Der (490 aa).

EngA-type G domains are found at residues 3–166 (PVVA…MEDL) and 203–376 (IKLA…DSST). GTP-binding positions include 9 to 16 (GRPNVGKS), 56 to 60 (DTGGI), 118 to 121 (NKTD), 209 to 216 (GRPNVGKS), 256 to 260 (DTAGV), and 321 to 324 (NKWD). A KH-like domain is found at 377–461 (RRVGTSMLTR…PIRIQFKEGE (85 aa)).

The protein belongs to the TRAFAC class TrmE-Era-EngA-EngB-Septin-like GTPase superfamily. EngA (Der) GTPase family. In terms of assembly, associates with the 50S ribosomal subunit.

Its function is as follows. GTPase that plays an essential role in the late steps of ribosome biogenesis. In Shigella flexneri serotype 5b (strain 8401), this protein is GTPase Der.